A 505-amino-acid chain; its full sequence is ATP synthase subunit alpha (505 aa).

The disordered stretch occupies residues 118-138 (VDGLGPINTTNTRPIESPAPG). 172-179 (GDRQTGKT) is an ATP binding site.

This sequence belongs to the ATPase alpha/beta chains family. F-type ATPases have 2 components, CF(1) - the catalytic core - and CF(0) - the membrane proton channel. CF(1) has five subunits: alpha(3), beta(3), gamma(1), delta(1), epsilon(1). CF(0) has three main subunits: a(1), b(2) and c(9-12). The alpha and beta chains form an alternating ring which encloses part of the gamma chain. CF(1) is attached to CF(0) by a central stalk formed by the gamma and epsilon chains, while a peripheral stalk is formed by the delta and b chains.

Its subcellular location is the cell membrane. The catalysed reaction is ATP + H2O + 4 H(+)(in) = ADP + phosphate + 5 H(+)(out). Its function is as follows. Produces ATP from ADP in the presence of a proton gradient across the membrane. The alpha chain is a regulatory subunit. The sequence is that of ATP synthase subunit alpha from Bacillus cereus (strain ATCC 14579 / DSM 31 / CCUG 7414 / JCM 2152 / NBRC 15305 / NCIMB 9373 / NCTC 2599 / NRRL B-3711).